We begin with the raw amino-acid sequence, 1392 residues long: DNA-directed RNA polymerase subunit beta (1392 aa).

It belongs to the RNA polymerase beta chain family. As to quaternary structure, the RNAP catalytic core consists of 2 alpha, 1 beta, 1 beta' and 1 omega subunit. When a sigma factor is associated with the core the holoenzyme is formed, which can initiate transcription.

It catalyses the reaction RNA(n) + a ribonucleoside 5'-triphosphate = RNA(n+1) + diphosphate. Functionally, DNA-dependent RNA polymerase catalyzes the transcription of DNA into RNA using the four ribonucleoside triphosphates as substrates. The protein is DNA-directed RNA polymerase subunit beta of Neisseria meningitidis serogroup B (strain ATCC BAA-335 / MC58).